A 410-amino-acid chain; its full sequence is TNF receptor-associated factor family protein DDB_G0279745 (410 aa).

The RING-type; degenerate zinc finger occupies Cys-27–Arg-67. TRAF-type zinc fingers lie at residues Tyr-81–Gln-154 and Gln-154–Ile-213. The stretch at Leu-216–Ala-284 forms a coiled coil.

The protein belongs to the TNF receptor-associated factor family.

Its subcellular location is the cytoplasm. In terms of biological role, probable adapter protein and signal transducer that links members of the tumor necrosis factor receptor family to different signaling pathways by association with the receptor cytoplasmic domain and kinases. This Dictyostelium discoideum (Social amoeba) protein is TNF receptor-associated factor family protein DDB_G0279745.